A 351-amino-acid polypeptide reads, in one-letter code: Soluble interferon alpha/beta receptor OPG204 (351 aa).

The N-terminal stretch at 1-19 (MTMKMMVHIYFVSLLLLLF) is a signal peptide. 2 consecutive Ig-like C2-type domains span residues 65-147 (LGEP…RSHI) and 155-237 (PKTY…IVVS). 2 cysteine pairs are disulfide-bonded: cysteine 73–cysteine 129 and cysteine 172–cysteine 221. N-linked (GlcNAc...) asparagine; by host glycosylation is found at asparagine 117, asparagine 182, asparagine 261, asparagine 269, and asparagine 321. The Ig-like V-type domain occupies 246 to 345 (PSQDHRFKLI…HNYYFEKTLT (100 aa)). A disulfide bond links cysteine 272 and cysteine 333.

This sequence belongs to the interleukin-1 receptor family. As to quaternary structure, interacts with host IFNA1.

The protein localises to the secreted. Its function is as follows. Counteracts the antiviral effects of host IFN-alpha/beta and key IFN-inducible proteins involved in viral RNA degradation suxh as host OAS1. Acts as a soluble IFN-alpha receptor and thus inhibits the interaction between host IFN-alpha and its receptor. This is Soluble interferon alpha/beta receptor OPG204 (OPG204) from Vaccinia virus (strain Western Reserve) (VACV).